Consider the following 421-residue polypeptide: Subtilisin-like protease 2 (421 aa).

Positions 1–16 are cleaved as a signal peptide; that stretch reads MQLLNFGLLLLPFVAG. Positions 17–122 are excised as a propeptide; the sequence is DLAPQPEPLL…VHPDQHFYLA (106 aa). In terms of domain architecture, Inhibitor I9 spans 36-121; it reads QYLVTLKEGL…SVHPDQHFYL (86 aa). The region spanning 131–421 is the Peptidase S8 domain; the sequence is RWGLGYMSSK…ERKCKLPKYY (291 aa). Asp169 functions as the Charge relay system in the catalytic mechanism. Asn192 carries an N-linked (GlcNAc...) asparagine glycan. His201 functions as the Charge relay system in the catalytic mechanism. Asn248, Asn261, and Asn348 each carry an N-linked (GlcNAc...) asparagine glycan. The active-site Charge relay system is the Ser357. Residue Asn388 is glycosylated (N-linked (GlcNAc...) asparagine).

This sequence belongs to the peptidase S8 family.

It is found in the secreted. Its function is as follows. Secreted subtilisin-like serine protease with keratinolytic activity that contributes to pathogenicity. This Trichophyton rubrum (Athlete's foot fungus) protein is Subtilisin-like protease 2 (SUB2).